The primary structure comprises 216 residues: NKG2-D type II integral membrane protein (216 aa).

The Cytoplasmic portion of the chain corresponds to 1–51 (MGWIRGRRSRHSWEMSEFHNYNLDLKKSDFSTRWQKQRCPVVKSKCRENAS). The chain crosses the membrane as a helical; Signal-anchor for type II membrane protein span at residues 52-72 (PFFFCCFIAVAMGIRFIIMVT). Residues 73 to 216 (IWSAVFLNSL…NTYICMQRTV (144 aa)) lie on the Extracellular side of the membrane. Disulfide bonds link Cys-96–Cys-105 and Cys-99–Cys-110. One can recognise a C-type lectin domain in the interval 98–213 (PCPKNWICYK…STPNTYICMQ (116 aa)). 4 N-linked (GlcNAc...) asparagine glycosylation sites follow: Asn-115, Asn-131, Asn-163, and Asn-202. Disulfide bonds link Cys-127–Cys-211 and Cys-189–Cys-203.

As to quaternary structure, homodimer; disulfide-linked. Heterohexamer composed of two subunits of KLRK1 and four subunits of HCST/DAP10. Interacts (via transmembrane domain) with HCST/DAP10 (via transmembrane domain); the interaction is required for KLRK1 NK cell surface and induces NK cell-mediated cytotoxicity. Can form disulfide-bonded heterodimer with CD94. Interacts with CEACAM1; recruits PTPN6 that dephosphorylates VAV1. Natural killer cells.

Its subcellular location is the cell membrane. In terms of biological role, functions as an activating and costimulatory receptor involved in immunosurveillance upon binding to various cellular stress-inducible ligands displayed at the surface of autologous tumor cells and virus-infected cells. Provides both stimulatory and costimulatory innate immune responses on activated killer (NK) cells, leading to cytotoxic activity. Acts as a costimulatory receptor for T-cell receptor (TCR) in CD8(+) T-cell-mediated adaptive immune responses by amplifying T-cell activation. Stimulates perforin-mediated elimination of ligand-expressing tumor cells. Signaling involves calcium influx, culminating in the expression of TNF-alpha. Participates in NK cell-mediated bone marrow graft rejection. May play a regulatory role in differentiation and survival of NK cells. Binds to ligands belonging to various subfamilies of MHC class I-related glycoproteins. This chain is NKG2-D type II integral membrane protein (KLRK1), found in Pan troglodytes (Chimpanzee).